A 377-amino-acid polypeptide reads, in one-letter code: Succinyl-diaminopimelate desuccinylase (377 aa).

Zn(2+) is bound at residue H67. The active site involves D69. Position 100 (D100) interacts with Zn(2+). The active-site Proton acceptor is E134. Residues E135, E163, and H349 each contribute to the Zn(2+) site.

It belongs to the peptidase M20A family. DapE subfamily. Homodimer. Requires Zn(2+) as cofactor. It depends on Co(2+) as a cofactor.

It catalyses the reaction N-succinyl-(2S,6S)-2,6-diaminopimelate + H2O = (2S,6S)-2,6-diaminopimelate + succinate. Its pathway is amino-acid biosynthesis; L-lysine biosynthesis via DAP pathway; LL-2,6-diaminopimelate from (S)-tetrahydrodipicolinate (succinylase route): step 3/3. Its function is as follows. Catalyzes the hydrolysis of N-succinyl-L,L-diaminopimelic acid (SDAP), forming succinate and LL-2,6-diaminopimelate (DAP), an intermediate involved in the bacterial biosynthesis of lysine and meso-diaminopimelic acid, an essential component of bacterial cell walls. This is Succinyl-diaminopimelate desuccinylase from Glaesserella parasuis serovar 5 (strain SH0165) (Haemophilus parasuis).